Reading from the N-terminus, the 85-residue chain is Homeobox protein knotted-1-like 5 (85 aa).

The ELK domain occupies 1–21 (ELKEMLLKKYSGCLSRLRSEF). Positions 22–85 (LKKRKKGKLP…NQRKRHWKPS (64 aa)) form a DNA-binding region, homeobox; TALE-type.

This sequence belongs to the TALE/KNOX homeobox family. In terms of tissue distribution, strongly expressed in ear inflorescence primordia and shoot meristem. Weakly expressed in embryos. Absent from leaves.

It is found in the nucleus. Its function is as follows. Probably binds to the DNA sequence 5'-TGAC-3'. This is Homeobox protein knotted-1-like 5 (KNOX5) from Zea mays (Maize).